Here is a 391-residue protein sequence, read N- to C-terminus: Alkanesulfonate monooxygenase (391 aa).

The protein belongs to the SsuD family.

The catalysed reaction is an alkanesulfonate + FMNH2 + O2 = an aldehyde + FMN + sulfite + H2O + 2 H(+). In terms of biological role, catalyzes the desulfonation of aliphatic sulfonates. This chain is Alkanesulfonate monooxygenase, found in Rhodopseudomonas palustris (strain TIE-1).